A 227-amino-acid polypeptide reads, in one-letter code: LysM and putative peptidoglycan-binding domain-containing protein 1 (227 aa).

Phosphoserine is present on residues Ser-23 and Ser-33. The LysM domain maps to 40-84 (LEHQLEPGDTLAGLALKYGVTMEQIKRTNRLYTNDSIFLKKTLYI). The disordered stretch occupies residues 95-157 (NGLDSEEEEN…PSHDLSASDF (63 aa)). Over residues 98–108 (DSEEEENDGEE) the composition is skewed to acidic residues. Ser-99 bears the Phosphoserine mark. The span at 143 to 152 (QGTSTPSHDL) shows a compositional bias: polar residues. 4 positions are modified to phosphoserine: Ser-166, Ser-181, Ser-194, and Ser-212. A disordered region spans residues 169–227 (KKAAAQKLRKGESGVPEEDTGLYPSSPRMQQRAVLGPVPLTRTSRTQTLRDQEDEIFKL). Basic and acidic residues predominate over residues 216–227 (TLRDQEDEIFKL).

The polypeptide is LysM and putative peptidoglycan-binding domain-containing protein 1 (Lysmd1) (Rattus norvegicus (Rat)).